The following is a 910-amino-acid chain: Protein translocase subunit SecA (910 aa).

Residues Gln86, 104–108 (GEGKT), and Asp499 contribute to the ATP site. Positions 894, 896, 905, and 906 each coordinate Zn(2+).

This sequence belongs to the SecA family. As to quaternary structure, monomer and homodimer. Part of the essential Sec protein translocation apparatus which comprises SecA, SecYEG and auxiliary proteins SecDF-YajC and YidC. The cofactor is Zn(2+).

The protein localises to the cell inner membrane. Its subcellular location is the cytoplasm. It carries out the reaction ATP + H2O + cellular proteinSide 1 = ADP + phosphate + cellular proteinSide 2.. Functionally, part of the Sec protein translocase complex. Interacts with the SecYEG preprotein conducting channel. Has a central role in coupling the hydrolysis of ATP to the transfer of proteins into and across the cell membrane, serving both as a receptor for the preprotein-SecB complex and as an ATP-driven molecular motor driving the stepwise translocation of polypeptide chains across the membrane. This chain is Protein translocase subunit SecA, found in Rickettsia bellii (strain OSU 85-389).